Consider the following 308-residue polypeptide: Cytochrome b (308 aa).

4 consecutive transmembrane segments (helical) span residues 1–21, 45–66, 81–101, and 146–166; these read FGSL…LLAM, WLIR…YLHI, WNIG…GYVL, and FFAF…VHLT. 2 residues coordinate heme b: His-51 and His-65. Heme b is bound by residues His-150 and His-164. His-169 lines the a ubiquinone pocket. 3 helical membrane passes run 194–214, 256–276, and 288–308; these read IKDL…ALFS, LGGV…PLLH, and LSQI…WVGS.

It belongs to the cytochrome b family. As to quaternary structure, the cytochrome bc1 complex contains 11 subunits: 3 respiratory subunits (MT-CYB, CYC1 and UQCRFS1), 2 core proteins (UQCRC1 and UQCRC2) and 6 low-molecular weight proteins (UQCRH/QCR6, UQCRB/QCR7, UQCRQ/QCR8, UQCR10/QCR9, UQCR11/QCR10 and a cleavage product of UQCRFS1). This cytochrome bc1 complex then forms a dimer. Requires heme b as cofactor.

It localises to the mitochondrion inner membrane. Component of the ubiquinol-cytochrome c reductase complex (complex III or cytochrome b-c1 complex) that is part of the mitochondrial respiratory chain. The b-c1 complex mediates electron transfer from ubiquinol to cytochrome c. Contributes to the generation of a proton gradient across the mitochondrial membrane that is then used for ATP synthesis. The polypeptide is Cytochrome b (MT-CYB) (Corvus corax (Common raven)).